The following is a 283-amino-acid chain: Pantothenate synthetase (283 aa).

30-37 (MGALHEGH) contributes to the ATP binding site. The active-site Proton donor is the histidine 37. Residue glutamine 61 coordinates (R)-pantoate. Beta-alanine is bound at residue glutamine 61. 147-150 (GEKD) serves as a coordination point for ATP. Residue glutamine 153 participates in (R)-pantoate binding. ATP is bound by residues valine 176 and 184 to 187 (VSSR).

The protein belongs to the pantothenate synthetase family. In terms of assembly, homodimer.

It is found in the cytoplasm. It carries out the reaction (R)-pantoate + beta-alanine + ATP = (R)-pantothenate + AMP + diphosphate + H(+). The protein operates within cofactor biosynthesis; (R)-pantothenate biosynthesis; (R)-pantothenate from (R)-pantoate and beta-alanine: step 1/1. Catalyzes the condensation of pantoate with beta-alanine in an ATP-dependent reaction via a pantoyl-adenylate intermediate. The protein is Pantothenate synthetase of Chlorobium limicola (strain DSM 245 / NBRC 103803 / 6330).